We begin with the raw amino-acid sequence, 372 residues long: tRNA-specific 2-thiouridylase MnmA (372 aa).

ATP contacts are provided by residues 17-24 (GMSGGVDS) and Met43. The segment at 103–105 (NPD) is interaction with target base in tRNA. Cys108 (nucleophile) is an active-site residue. The cysteines at positions 108 and 205 are disulfide-linked. Position 133 (Gly133) interacts with ATP. The interaction with tRNA stretch occupies residues 155 to 157 (KDQ). The active-site Cysteine persulfide intermediate is Cys205. An interaction with tRNA region spans residues 317 to 318 (RY).

It belongs to the MnmA/TRMU family.

It localises to the cytoplasm. It catalyses the reaction S-sulfanyl-L-cysteinyl-[protein] + uridine(34) in tRNA + AH2 + ATP = 2-thiouridine(34) in tRNA + L-cysteinyl-[protein] + A + AMP + diphosphate + H(+). Catalyzes the 2-thiolation of uridine at the wobble position (U34) of tRNA, leading to the formation of s(2)U34. The protein is tRNA-specific 2-thiouridylase MnmA of Shewanella sediminis (strain HAW-EB3).